The chain runs to 394 residues: [Pyruvate dehydrogenase (acetyl-transferring)] kinase 1, mitochondrial (394 aa).

Residues 1–20 constitute a mitochondrion transit peptide; that stretch reads MWKIMRSWKCGGMRWAHRQR. In terms of domain architecture, Histidine kinase spans 126–386; the sequence is AYPYELHNPP…DVYIKLKGPS (261 aa). His148 bears the Phosphohistidine; by autocatalysis mark. Residues 267–274, Asp304, 323–324, and 347–352 each bind ATP; these read EVFKNAFE, ST, and GMGFGL.

Belongs to the PDK/BCKDK protein kinase family. In terms of assembly, interacts with PKP2.

Its subcellular location is the mitochondrion matrix. The enzyme catalyses L-seryl-[pyruvate dehydrogenase E1 alpha subunit] + ATP = O-phospho-L-seryl-[pyruvate dehydrogenase E1 alpha subunit] + ADP + H(+). Its function is as follows. Inhibits the mitochondrial pyruvate dehydrogenase complex by phosphorylation of the E1 alpha subunit (PDA1), thus contributing to the regulation of glucose metabolism. Also involved in telomere maintenance. This chain is [Pyruvate dehydrogenase (acetyl-transferring)] kinase 1, mitochondrial, found in Saccharomyces cerevisiae (strain ATCC 204508 / S288c) (Baker's yeast).